The following is a 192-amino-acid chain: uncharacterized protein (192 aa).

Residues 29–160 (QRQAAVLVPV…PLDIHRRGNH (132 aa)) form the Nudix hydrolase domain. The short motif at 67-89 (GAVDDTDASLIAAALREAQEEVA) is the Nudix box element. Mg(2+) is bound by residues Glu83 and Glu87.

The protein belongs to the Nudix hydrolase family. PCD1 subfamily. Mn(2+) serves as cofactor. Mg(2+) is required as a cofactor.

In terms of biological role, probably mediates the hydrolysis of some nucleoside diphosphate derivatives. This is an uncharacterized protein from Cronobacter sakazakii (strain ATCC BAA-894) (Enterobacter sakazakii).